The following is a 517-amino-acid chain: Ribonuclease Y (517 aa).

The helical transmembrane segment at 1 to 21 (MIEVVVGIGAGLIGIGAGYLV) threads the bilayer. In terms of domain architecture, KH spans 207–273 (LINVVNIKND…TRVIELLVED (67 aa)). Residues 333–426 (ALAHSLEVAH…VCAADALSAA (94 aa)) form the HD domain.

Belongs to the RNase Y family.

Its subcellular location is the cell membrane. Endoribonuclease that initiates mRNA decay. This chain is Ribonuclease Y, found in Campylobacter fetus subsp. fetus (strain 82-40).